The following is a 176-amino-acid chain: Large ribosomal subunit protein uL15 (176 aa).

Positions 1-13 are enriched in basic and acidic residues; it reads MKLNDLRDNEGAR. 2 disordered regions span residues 1–48 and 151–176; these read MKLN…AIKG and IPAA…AKAE. A compositionally biased stretch (gly residues) spans 21 to 35; sequence RGIGSGKGKTGGRGQ. Residues 156–176 show a composition bias toward basic and acidic residues; sequence PEHEKKAARSEANKKAKAKAE.

It belongs to the universal ribosomal protein uL15 family. As to quaternary structure, part of the 50S ribosomal subunit.

Binds to the 23S rRNA. The polypeptide is Large ribosomal subunit protein uL15 (Erythrobacter litoralis (strain HTCC2594)).